The following is a 64-amino-acid chain: Large ribosomal subunit protein uL29 (64 aa).

This sequence belongs to the universal ribosomal protein uL29 family.

The chain is Large ribosomal subunit protein uL29 from Dichelobacter nodosus (strain VCS1703A).